An 88-amino-acid polypeptide reads, in one-letter code: Small ribosomal subunit protein uS15 (88 aa).

This sequence belongs to the universal ribosomal protein uS15 family. As to quaternary structure, part of the 30S ribosomal subunit. Forms a bridge to the 50S subunit in the 70S ribosome, contacting the 23S rRNA.

In terms of biological role, one of the primary rRNA binding proteins, it binds directly to 16S rRNA where it helps nucleate assembly of the platform of the 30S subunit by binding and bridging several RNA helices of the 16S rRNA. Functionally, forms an intersubunit bridge (bridge B4) with the 23S rRNA of the 50S subunit in the ribosome. This chain is Small ribosomal subunit protein uS15, found in Leptospira interrogans serogroup Icterohaemorrhagiae serovar copenhageni (strain Fiocruz L1-130).